Reading from the N-terminus, the 163-residue chain is MHTRAIYPGTFDPITNGHADLIERAAKLFKHVIIGIAANPSKQPRFTLEERVELVNRVTAHLDNVEVVGFSGLLVDFAKEQKASVLVRGLRAVSDFEYEFQLANMNRRLSPDLESVFLTPAEENSFISSTLVKEVALHGGDVSQFVHSEVATALAAKLKLAKP.

Residue Thr10 participates in substrate binding. Residues 10 to 11 and His18 contribute to the ATP site; that span reads TF. The substrate site is built by Lys42, Leu74, and Arg88. ATP-binding positions include 89–91, Glu99, and 124–130; these read GLR and NSFISST.

The protein belongs to the bacterial CoaD family. In terms of assembly, homohexamer. Mg(2+) is required as a cofactor.

It is found in the cytoplasm. It carries out the reaction (R)-4'-phosphopantetheine + ATP + H(+) = 3'-dephospho-CoA + diphosphate. Its pathway is cofactor biosynthesis; coenzyme A biosynthesis; CoA from (R)-pantothenate: step 4/5. Reversibly transfers an adenylyl group from ATP to 4'-phosphopantetheine, yielding dephospho-CoA (dPCoA) and pyrophosphate. The chain is Phosphopantetheine adenylyltransferase from Shewanella baltica (strain OS195).